The following is a 314-amino-acid chain: tRNA-cytidine(32) 2-sulfurtransferase (314 aa).

Residues 39–44 (SGGKDS) carry the PP-loop motif motif. [4Fe-4S] cluster-binding residues include Cys114, Cys117, and Cys205.

It belongs to the TtcA family. In terms of assembly, homodimer. It depends on Mg(2+) as a cofactor. [4Fe-4S] cluster serves as cofactor.

The protein localises to the cytoplasm. It carries out the reaction cytidine(32) in tRNA + S-sulfanyl-L-cysteinyl-[cysteine desulfurase] + AH2 + ATP = 2-thiocytidine(32) in tRNA + L-cysteinyl-[cysteine desulfurase] + A + AMP + diphosphate + H(+). It participates in tRNA modification. Its function is as follows. Catalyzes the ATP-dependent 2-thiolation of cytidine in position 32 of tRNA, to form 2-thiocytidine (s(2)C32). The sulfur atoms are provided by the cysteine/cysteine desulfurase (IscS) system. The chain is tRNA-cytidine(32) 2-sulfurtransferase from Cupriavidus metallidurans (strain ATCC 43123 / DSM 2839 / NBRC 102507 / CH34) (Ralstonia metallidurans).